A 329-amino-acid chain; its full sequence is Coiled-coil domain-containing protein 54 (329 aa).

A coiled-coil region spans residues 86–149 (NIVSSISNIQ…VTELESQNSY (64 aa)). Polar residues predominate over residues 178–191 (TPKGTATSPDTVIS). Residues 178 to 214 (TPKGTATSPDTVISSAEPERVSSYPEPTGELKKKTTS) are disordered. A Phosphothreonine modification is found at Thr-182.

The chain is Coiled-coil domain-containing protein 54 (Ccdc54) from Mus musculus (Mouse).